A 294-amino-acid polypeptide reads, in one-letter code: Large ribosomal subunit protein uL2 (294 aa).

Disordered regions lie at residues 1 to 37 (MGIRTFRPYTPSTRHMTVSNFEELSRDENGKRPRPEK) and 228 to 294 (GSVM…RAAQ). Polar residues predominate over residues 10 to 22 (TPSTRHMTVSNFE). Over residues 23–37 (ELSRDENGKRPRPEK) the composition is skewed to basic and acidic residues. The segment covering 264 to 285 (KTRKRNKPSNKFIVRGRRRGGR) has biased composition (basic residues).

It belongs to the universal ribosomal protein uL2 family. As to quaternary structure, part of the 50S ribosomal subunit. Forms a bridge to the 30S subunit in the 70S ribosome.

Its function is as follows. One of the primary rRNA binding proteins. Required for association of the 30S and 50S subunits to form the 70S ribosome, for tRNA binding and peptide bond formation. It has been suggested to have peptidyltransferase activity; this is somewhat controversial. Makes several contacts with the 16S rRNA in the 70S ribosome. The chain is Large ribosomal subunit protein uL2 from Synechococcus sp. (strain JA-3-3Ab) (Cyanobacteria bacterium Yellowstone A-Prime).